The following is a 522-amino-acid chain: Maturase K (522 aa).

This sequence belongs to the intron maturase 2 family. MatK subfamily.

The protein resides in the plastid. The protein localises to the chloroplast. In terms of biological role, usually encoded in the trnK tRNA gene intron. Probably assists in splicing its own and other chloroplast group II introns. The protein is Maturase K of Iris orientalis (Yellowband iris).